The chain runs to 238 residues: Uridylate kinase (238 aa).

Residue 12 to 15 (KLSG) participates in ATP binding. Gly54 contributes to the UMP binding site. ATP-binding residues include Gly55 and Arg59. UMP is bound by residues Asp74 and 135-142 (TGNPYFTT). Residues Thr162, Asn163, Tyr168, and Asp171 each contribute to the ATP site.

It belongs to the UMP kinase family. Homohexamer.

The protein localises to the cytoplasm. The catalysed reaction is UMP + ATP = UDP + ADP. The protein operates within pyrimidine metabolism; CTP biosynthesis via de novo pathway; UDP from UMP (UMPK route): step 1/1. With respect to regulation, inhibited by UTP. Catalyzes the reversible phosphorylation of UMP to UDP. The chain is Uridylate kinase from Nitrobacter hamburgensis (strain DSM 10229 / NCIMB 13809 / X14).